We begin with the raw amino-acid sequence, 384 residues long: 1-deoxy-D-xylulose 5-phosphate reductoisomerase (384 aa).

Positions 10, 11, 12, 13, 36, 37, 38, and 121 each coordinate NADPH. K122 contributes to the 1-deoxy-D-xylulose 5-phosphate binding site. E123 is an NADPH binding site. D147 lines the Mn(2+) pocket. Residues S148, E149, S173, and H196 each coordinate 1-deoxy-D-xylulose 5-phosphate. E149 provides a ligand contact to Mn(2+). Residue G202 participates in NADPH binding. 4 residues coordinate 1-deoxy-D-xylulose 5-phosphate: S209, N214, K215, and E218. E218 lines the Mn(2+) pocket.

It belongs to the DXR family. Requires Mg(2+) as cofactor. Mn(2+) is required as a cofactor.

It catalyses the reaction 2-C-methyl-D-erythritol 4-phosphate + NADP(+) = 1-deoxy-D-xylulose 5-phosphate + NADPH + H(+). The protein operates within isoprenoid biosynthesis; isopentenyl diphosphate biosynthesis via DXP pathway; isopentenyl diphosphate from 1-deoxy-D-xylulose 5-phosphate: step 1/6. Its function is as follows. Catalyzes the NADPH-dependent rearrangement and reduction of 1-deoxy-D-xylulose-5-phosphate (DXP) to 2-C-methyl-D-erythritol 4-phosphate (MEP). The polypeptide is 1-deoxy-D-xylulose 5-phosphate reductoisomerase (Exiguobacterium sibiricum (strain DSM 17290 / CCUG 55495 / CIP 109462 / JCM 13490 / 255-15)).